The following is a 105-amino-acid chain: Protein METHYLENE BLUE SENSITIVITY 1 (105 aa).

The segment at Arg26–Lys46 is disordered. The span at Arg36–Lys46 shows a compositional bias: basic and acidic residues.

In terms of tissue distribution, mainly expressed in the epidermis.

The protein resides in the nucleus. Its subcellular location is the cytoplasm. It localises to the stress granule. In terms of biological role, required for acclimation to reactive oxygen species (ROS) responses downstream of beta-cyclocitral (beta-cc) or mediated by dihydroactinidiolide, including singlet oxygen 1O(2) detoxification reactions, especially upon light-mediated photooxidative stress, and leading to programmed cell death. Prevents leaf senescence. Involved in cold acclimation. This Arabidopsis thaliana (Mouse-ear cress) protein is Protein METHYLENE BLUE SENSITIVITY 1.